The chain runs to 413 residues: Serine hydroxymethyltransferase (413 aa).

Residues Leu-117 and 121–123 (GHL) each bind (6S)-5,6,7,8-tetrahydrofolate. An N6-(pyridoxal phosphate)lysine modification is found at Lys-226. (6S)-5,6,7,8-tetrahydrofolate-binding positions include Glu-239 and 349 to 351 (SPF).

It belongs to the SHMT family. In terms of assembly, homodimer. It depends on pyridoxal 5'-phosphate as a cofactor.

The protein localises to the cytoplasm. It catalyses the reaction (6R)-5,10-methylene-5,6,7,8-tetrahydrofolate + glycine + H2O = (6S)-5,6,7,8-tetrahydrofolate + L-serine. It functions in the pathway one-carbon metabolism; tetrahydrofolate interconversion. The protein operates within amino-acid biosynthesis; glycine biosynthesis; glycine from L-serine: step 1/1. Functionally, catalyzes the reversible interconversion of serine and glycine with tetrahydrofolate (THF) serving as the one-carbon carrier. This reaction serves as the major source of one-carbon groups required for the biosynthesis of purines, thymidylate, methionine, and other important biomolecules. Also exhibits THF-independent aldolase activity toward beta-hydroxyamino acids, producing glycine and aldehydes, via a retro-aldol mechanism. This chain is Serine hydroxymethyltransferase, found in Bacillus mycoides (strain KBAB4) (Bacillus weihenstephanensis).